Reading from the N-terminus, the 178-residue chain is Tetratricopeptide repeat protein 9C (178 aa).

3 TPR repeats span residues alanine 15–leucine 48, alanine 79–asparagine 114, and valine 115–aspartate 148.

It belongs to the TTC9 family.

The sequence is that of Tetratricopeptide repeat protein 9C (ttc9c) from Xenopus tropicalis (Western clawed frog).